We begin with the raw amino-acid sequence, 775 residues long: Mitochondrial intermediate peptidase (775 aa).

A mitochondrion-targeting transit peptide spans 1–28 (MIARPARDVLSSATKKQFRFRGCLAARH). His558 contacts Zn(2+). Glu559 is an active-site residue. The Zn(2+) site is built by His562 and His565.

It belongs to the peptidase M3 family. The cofactor is Zn(2+).

The protein localises to the mitochondrion matrix. The enzyme catalyses Release of an N-terminal octapeptide as second stage of processing of some proteins imported into the mitochondrion.. Its function is as follows. Cleaves proteins, imported into the mitochondrion, to their mature size. While most mitochondrial precursor proteins are processed to the mature form in one step by mitochondrial processing peptidase (MPP), the sequential cleavage by MIP of an octapeptide after initial processing by MPP is a required step for a subgroup of nuclear-encoded precursor proteins destined for the matrix or the inner membrane. This chain is Mitochondrial intermediate peptidase (OCT1), found in Schizophyllum commune (Split gill fungus).